A 506-amino-acid chain; its full sequence is Anaerobic nitric oxide reductase transcription regulator NorR (506 aa).

Residue Asp57 is modified to 4-aspartylphosphate. Residues Met187–Val416 enclose the Sigma-54 factor interaction domain. ATP is bound by residues Gly215–Glu222 and Ala278–Glu287. Positions Trp481–Lys500 form a DNA-binding region, H-T-H motif.

Its pathway is nitrogen metabolism; nitric oxide reduction. In terms of biological role, required for the expression of anaerobic nitric oxide (NO) reductase, acts as a transcriptional activator for at least the norVW operon. Activation also requires sigma-54. This chain is Anaerobic nitric oxide reductase transcription regulator NorR, found in Salmonella schwarzengrund (strain CVM19633).